We begin with the raw amino-acid sequence, 61 residues long: Small ribosomal subunit protein uS14B (61 aa).

4 residues coordinate Zn(2+): C24, C27, C40, and C43.

The protein belongs to the universal ribosomal protein uS14 family. Zinc-binding uS14 subfamily. In terms of assembly, part of the 30S ribosomal subunit. Contacts proteins S3 and S10. It depends on Zn(2+) as a cofactor.

Binds 16S rRNA, required for the assembly of 30S particles and may also be responsible for determining the conformation of the 16S rRNA at the A site. This is Small ribosomal subunit protein uS14B from Myxococcus xanthus (strain DK1622).